The following is a 132-amino-acid chain: PGA2-homolog C27.01c (132 aa).

The chain crosses the membrane as a helical span at residues 17–34 (WIRIIVYVGGYMLIRPYL). Disordered regions lie at residues 50–90 (LLEG…DAEF) and 106–132 (EYFK…HLED). Basic and acidic residues predominate over residues 62 to 75 (EMTHGTKPKEHGEF). A compositionally biased stretch (acidic residues) spans 76-87 (DTDDEEEEENPD). Residue Thr-77 is modified to Phosphothreonine. Over residues 106-115 (EYFKNQDKSP) the composition is skewed to basic and acidic residues. Residues 119-132 (YADDDEDIEEHLED) show a composition bias toward acidic residues.

It belongs to the PGA2 family.

Its subcellular location is the endoplasmic reticulum membrane. The protein resides in the nucleus membrane. In terms of biological role, involved processing and trafficking glycosylated proteins. The chain is PGA2-homolog C27.01c from Schizosaccharomyces pombe (strain 972 / ATCC 24843) (Fission yeast).